A 580-amino-acid polypeptide reads, in one-letter code: Tripeptidyl-peptidase sed5 (580 aa).

Residues 1–21 are disordered; that stretch reads MYPLDGSARPHPPGTTRLNSV. Residues 181–567 enclose the Peptidase S53 domain; that stretch reads RAQRLIVAEL…RRTLEELRRI (387 aa). Residue Asn236 is glycosylated (N-linked (GlcNAc...) asparagine). Catalysis depends on charge relay system residues Glu269, Asp273, and Ser479. The Ca(2+) site is built by Asp523 and Ile524. Residue Asn529 is glycosylated (N-linked (GlcNAc...) asparagine). The Ca(2+) site is built by Gly543, Gly545, and Asp547.

Ca(2+) serves as cofactor.

The protein localises to the secreted. Its subcellular location is the extracellular space. It carries out the reaction Release of an N-terminal tripeptide from a polypeptide.. Secreted tripeptidyl-peptidase which degrades proteins at acidic pHs and is involved in virulence. In Aspergillus fumigatus (strain ATCC MYA-4609 / CBS 101355 / FGSC A1100 / Af293) (Neosartorya fumigata), this protein is Tripeptidyl-peptidase sed5 (sed5).